The following is a 464-amino-acid chain: DNA repair protein KRE29 (464 aa).

The interval 1–69 is disordered; it reads MGSVNSSPNE…SDEEFSSLEN (69 aa). Residues 53–65 show a composition bias toward acidic residues; the sequence is PENDSLNSDEEFS. Phosphoserine occurs at positions 81 and 101.

Component of the Smc5-Smc6 complex which consists of KRE29, MMS21, NSE1, NSE3, NSE4, NSE5, SMC5 and SMC6. Interacts with NSE5.

The protein resides in the nucleus. The protein localises to the cytoplasm. Functionally, acts in a DNA repair pathway for removal of UV-induced DNA damage that is distinct from classical nucleotide excision repair and in repair of ionizing radiation damage. Functions in homologous recombination repair of DNA double strand breaks and in recovery of stalled replication forks. This is DNA repair protein KRE29 (KRE29) from Saccharomyces cerevisiae (strain ATCC 204508 / S288c) (Baker's yeast).